A 688-amino-acid polypeptide reads, in one-letter code: Eukaryotic translation initiation factor 3 subunit B (688 aa).

Residues methionine 1–proline 28 are disordered. Acidic residues predominate over residues tyrosine 9–phenylalanine 25. The RRM domain maps to asparagine 57–aspartate 141. 6 WD repeats span residues arginine 208 to lysine 246, phenylalanine 247 to serine 287, aspartate 291 to lysine 329, isoleucine 332 to glutamate 367, glutamate 440 to methionine 482, and glycine 527 to asparagine 572. Residues aspartate 612–asparagine 643 are a coiled coil.

The protein belongs to the eIF-3 subunit B family. Component of the eukaryotic translation initiation factor 3 (eIF-3) complex.

The protein resides in the cytoplasm. Functionally, RNA-binding component of the eukaryotic translation initiation factor 3 (eIF-3) complex, which is involved in protein synthesis of a specialized repertoire of mRNAs and, together with other initiation factors, stimulates binding of mRNA and methionyl-tRNAi to the 40S ribosome. The eIF-3 complex specifically targets and initiates translation of a subset of mRNAs involved in cell proliferation. The sequence is that of Eukaryotic translation initiation factor 3 subunit B from Culex quinquefasciatus (Southern house mosquito).